We begin with the raw amino-acid sequence, 337 residues long: Formamidase (337 aa).

In terms of domain architecture, CN hydrolase spans 14 to 257 (VVIGLVQLQL…DEIITAEVRP (244 aa)). Glutamate 60 functions as the Proton acceptor in the catalytic mechanism. The active-site Proton donor is the lysine 129. Cysteine 162 acts as the Nucleophile in catalysis.

Belongs to the carbon-nitrogen hydrolase superfamily. Aliphatic amidase family.

It carries out the reaction formamide + H2O = formate + NH4(+). In terms of biological role, is an aliphatic amidase with a restricted substrate specificity, as it only hydrolyzes formamide. In Bradyrhizobium sp. (strain ORS 278), this protein is Formamidase.